Here is a 273-residue protein sequence, read N- to C-terminus: MRLDNPIGIYLLLWPTLWALFLASEGFPDLKLLLIFVLGVVLMRSAGCVINDYADRYIDKLVERTKHRPITSGEIHHRSALKFFVLLIMLAFLLVLLTNWLTIQLAMIAVLLAILYPFTKRWTYFPQFVLGLAFAMSVLMAFSATLNEIPITAWYVFAATVIWTVIYDTMYAMADREEDLKIGIKSSAILFAKFDRLIIGILQIIFLLILIKISNVFNLTISYHITLLLVTLLMIYHQYLIKNNENYSYLHGFLHNNYIGMVIFIGIVLSVGL.

8 helical membrane passes run 7–27, 30–50, 83–103, 122–142, 146–166, 197–217, 221–241, and 253–273; these read IGIY…SEGF, LKLL…GCVI, FFVL…WLTI, WTYF…LMAF, LNEI…WTVI, LIIG…SNVF, ISYH…QYLI, and FLHN…SVGL.

This sequence belongs to the UbiA prenyltransferase family. Mg(2+) is required as a cofactor.

It localises to the cell inner membrane. It carries out the reaction all-trans-octaprenyl diphosphate + 4-hydroxybenzoate = 4-hydroxy-3-(all-trans-octaprenyl)benzoate + diphosphate. It participates in cofactor biosynthesis; ubiquinone biosynthesis. In terms of biological role, catalyzes the prenylation of para-hydroxybenzoate (PHB) with an all-trans polyprenyl group. Mediates the second step in the final reaction sequence of ubiquinone-8 (UQ-8) biosynthesis, which is the condensation of the polyisoprenoid side chain with PHB, generating the first membrane-bound Q intermediate 3-octaprenyl-4-hydroxybenzoate. The polypeptide is 4-hydroxybenzoate octaprenyltransferase (Vesicomyosocius okutanii subsp. Calyptogena okutanii (strain HA)).